Reading from the N-terminus, the 352-residue chain is C-C chemokine receptor type 5 (352 aa).

At 1-30 (MDYQVSSPIYDIDYGASEPCRKTDVKQMGA) the chain is on the extracellular side. Tyrosine 3 carries the post-translational modification Sulfotyrosine. O-linked (GalNAc...) serine glycans are attached at residues serine 6 and serine 7. Residues tyrosine 10 and tyrosine 14 each carry the sulfotyrosine modification. 2 cysteine pairs are disulfide-bonded: cysteine 20–cysteine 269 and cysteine 101–cysteine 178. Residues 31–58 (HLLPPLYSMVFLFGFVGNMLVVLILVNC) form a helical membrane-spanning segment. The Cytoplasmic portion of the chain corresponds to 59 to 68 (KRPKSMTDIY). Residues 69 to 89 (LLNLAISDLLFLFTVPFWAHY) form a helical membrane-spanning segment. Topologically, residues 90–102 (AAGQWDFGNTMCQ) are extracellular. A helical membrane pass occupies residues 103–124 (FLTGLYFIGFFSGIFFIILLTI). The Cytoplasmic segment spans residues 125–141 (DRYLAIVHAVFALKART). The helical transmembrane segment at 142–166 (VTFGVMTSVITWVVAVFASLPGIIF) threads the bilayer. Over 167-198 (TRSQKEGYHYTCSPHFPFGQYQFWKNFETLKM) the chain is Extracellular. A helical membrane pass occupies residues 199-218 (VILGLVLPLLVMVICYSGIL). The Cytoplasmic segment spans residues 219–235 (KTLLRCRNEKKRHRAVR). A helical transmembrane segment spans residues 236 to 260 (LIFTIMIVYFLFWAPYNIVLLLNTY). At 261-277 (QEFFGLNNCSSSNRLDQ) the chain is on the extracellular side. Residues 278-301 (AMQVTETLGMTHCCVNPIIYAFVG) form a helical membrane-spanning segment. The Cytoplasmic portion of the chain corresponds to 302–352 (EKFRNYLLVFFQKHIAKCFCECCSIFQKEAPERANSVYTRSTGEQEISVGL). Residues cysteine 321, cysteine 323, and cysteine 324 are each lipidated (S-palmitoyl cysteine). Serine 337, serine 342, and serine 349 each carry phosphoserine; by BARK1.

The protein belongs to the G-protein coupled receptor 1 family. In terms of assembly, interacts with PRAF2. Efficient ligand binding to CCL3/MIP-1alpha and CCL4/MIP-1beta requires sulfation, O-glycosylation and sialic acid modifications. Glycosylation on Ser-6 is required for efficient binding of CCL4. Interacts with GRK2. Interacts with ARRB1 and ARRB2. Interacts with CNIH4. Interacts with S100A4; this interaction stimulates T-lymphocyte chemotaxis. Post-translationally, sulfated on at least 2 of the N-terminal tyrosines. Sulfation is required for efficient binding of the chemokines, CCL3 and CCL4. Palmitoylation in the C-terminal is important for cell surface expression. In terms of processing, phosphorylation on serine residues in the C-terminal is stimulated by binding CC chemokines especially by APO-RANTES. Post-translationally, O-glycosylated, but not N-glycosylated. Ser-6 appears to be the major site even if Ser-7 may be also O-glycosylated. Also sialylated glycans present which contribute to chemokine binding. Ser-17 may also be glycosylated and, if so, with small moieties such as a T-antigen.

The protein localises to the cell membrane. Receptor for a number of inflammatory CC-chemokines including CCL3/MIP-1-alpha, CCL4/MIP-1-beta and RANTES and subsequently transduces a signal by increasing the intracellular calcium ion level. May play a role in the control of granulocytic lineage proliferation or differentiation. Participates in T-lymphocyte migration to the infection site by acting as a chemotactic receptor. This is C-C chemokine receptor type 5 (CCR5) from Ateles geoffroyi (Black-handed spider monkey).